An 807-amino-acid chain; its full sequence is Carbamoyltransferase HypF2 (807 aa).

The Acylphosphatase-like domain occupies 14-101 (RIRIRVRGVV…VDADGFAILE (88 aa)). C4-type zinc fingers lie at residues 120–145 (CPDC…CTQC) and 170–195 (CRPC…CPDC). Residues 212–415 (VDPIAETVAR…HVQFIRRARG (204 aa)) enclose the YrdC-like domain. Residues 663–682 (WGEQPSPGRPKTVAHSLGGV) are disordered.

Belongs to the carbamoyltransferase HypF family.

It carries out the reaction C-terminal L-cysteinyl-[HypE protein] + carbamoyl phosphate + ATP + H2O = C-terminal S-carboxamide-L-cysteinyl-[HypE protein] + AMP + phosphate + diphosphate + H(+). It participates in protein modification; [NiFe] hydrogenase maturation. Its function is as follows. Involved in the maturation of [NiFe] hydrogenases. Along with HypE, it catalyzes the synthesis of the CN ligands of the active site iron of [NiFe]-hydrogenases. HypF functions as a carbamoyl transferase using carbamoylphosphate as a substrate and transferring the carboxamido moiety in an ATP-dependent reaction to the thiolate of the C-terminal cysteine of HypE yielding a protein-S-carboxamide. This chain is Carbamoyltransferase HypF2 (hypF2), found in Cupriavidus necator (strain ATCC 17699 / DSM 428 / KCTC 22496 / NCIMB 10442 / H16 / Stanier 337) (Ralstonia eutropha).